Consider the following 253-residue polypeptide: Small ribosomal subunit protein uS3 (253 aa).

In terms of domain architecture, KH type-2 spans 21 to 92 (LNEFLTRELA…SVELYAEKVA (72 aa)). The segment at 211–253 (VEPKDEILPTTPISEQKGGKPDPQVPQQPPQQPPAMPPPVPTA) is disordered. Positions 233-253 (PQVPQQPPQQPPAMPPPVPTA) are enriched in pro residues.

It belongs to the universal ribosomal protein uS3 family.

Its subcellular location is the cytoplasm. It is found in the nucleus. The protein localises to the nucleolus. The protein resides in the mitochondrion inner membrane. It localises to the cytoskeleton. Its subcellular location is the spindle. The enzyme catalyses 2'-deoxyribonucleotide-(2'-deoxyribose 5'-phosphate)-2'-deoxyribonucleotide-DNA = a 3'-end 2'-deoxyribonucleotide-(2,3-dehydro-2,3-deoxyribose 5'-phosphate)-DNA + a 5'-end 5'-phospho-2'-deoxyribonucleoside-DNA + H(+). Component of the small ribosomal subunit. The ribosome is a large ribonucleoprotein complex responsible for the synthesis of proteins in the cell. Has endonuclease activity and plays a role in repair of damaged DNA. Also involved in other processes including regulation of transcription, translation of its cognate mRNA, spindle formation and chromosome movement during mitosis, and apoptosis. This Ambystoma mexicanum (Axolotl) protein is Small ribosomal subunit protein uS3 (RPS3).